The primary structure comprises 324 residues: DNA-directed RNA polymerase subunit alpha (324 aa).

The segment at 1-228 is alpha N-terminal domain (alpha-NTD); sequence MIEIQKPTIR…EHFNLFTDLS (228 aa). Residues 245–324 form an alpha C-terminal domain (alpha-CTD) region; sequence RNKLLDMTIE…STPKGEEEEK (80 aa).

Belongs to the RNA polymerase alpha chain family. Homodimer. The RNAP catalytic core consists of 2 alpha, 1 beta, 1 beta' and 1 omega subunit. When a sigma factor is associated with the core the holoenzyme is formed, which can initiate transcription.

It carries out the reaction RNA(n) + a ribonucleoside 5'-triphosphate = RNA(n+1) + diphosphate. Its function is as follows. DNA-dependent RNA polymerase catalyzes the transcription of DNA into RNA using the four ribonucleoside triphosphates as substrates. In Caldicellulosiruptor saccharolyticus (strain ATCC 43494 / DSM 8903 / Tp8T 6331), this protein is DNA-directed RNA polymerase subunit alpha.